A 163-amino-acid chain; its full sequence is NADH-quinone oxidoreductase subunit I (163 aa).

4Fe-4S ferredoxin-type domains are found at residues leucine 53 to glycine 83 and threonine 94 to asparagine 123. Residues cysteine 63, cysteine 66, cysteine 69, cysteine 73, cysteine 103, cysteine 106, cysteine 109, and cysteine 113 each coordinate [4Fe-4S] cluster.

Belongs to the complex I 23 kDa subunit family. In terms of assembly, NDH-1 is composed of 14 different subunits. Subunits NuoA, H, J, K, L, M, N constitute the membrane sector of the complex. [4Fe-4S] cluster serves as cofactor.

Its subcellular location is the cell inner membrane. The enzyme catalyses a quinone + NADH + 5 H(+)(in) = a quinol + NAD(+) + 4 H(+)(out). In terms of biological role, NDH-1 shuttles electrons from NADH, via FMN and iron-sulfur (Fe-S) centers, to quinones in the respiratory chain. The immediate electron acceptor for the enzyme in this species is believed to be ubiquinone. Couples the redox reaction to proton translocation (for every two electrons transferred, four hydrogen ions are translocated across the cytoplasmic membrane), and thus conserves the redox energy in a proton gradient. The polypeptide is NADH-quinone oxidoreductase subunit I (Parvibaculum lavamentivorans (strain DS-1 / DSM 13023 / NCIMB 13966)).